A 215-amino-acid polypeptide reads, in one-letter code: Porin MspB (215 aa).

Residues 1–31 (MTAFKRVLIAMISALLAGTTGMFVSAGAAHA) form the signal peptide.

This sequence belongs to the mycobacterial porin (TC 1.B.24) family. In terms of assembly, octamers. Probably forms a goblet with the wide end on the exterior of the outer membrane and a central channel. It is not known if mixed oligomers of MspB with other Msp subunits form in vivo.

It is found in the cell outer membrane. It localises to the secreted. The protein resides in the cell wall. Functionally, a backup porin induced when MspA, the major porin, is deleted. Probably forms a water-filled channel which favors the permeation of cations. There are about 2400 porins in wild-type, 800 in an mspA deletion and 150 in a double mspA-mspC deletion. A triple mspA-mspC-mspD deletion mutant has low but detectable channel activity. Different conductance values with maxima at 2.3 and 4.6 nanosiemens might be caused by a simultaneous reconstitution of MspB channels into the membrane or by the existence of different MspB conformations. This chain is Porin MspB (mspB), found in Mycolicibacterium smegmatis (strain ATCC 700084 / mc(2)155) (Mycobacterium smegmatis).